Here is a 66-residue protein sequence, read N- to C-terminus: VRDAYIAQNYNCVYACARDAYCNDLCTKNGARSGLFATFGPHGDACWCIALPNNVPLKVQGKCHRK.

An LCN-type CS-alpha/beta domain is found at 2-64; sequence RDAYIAQNYN…VPLKVQGKCH (63 aa). Cystine bridges form between C12/C63, C22/C46, and C26/C48.

The protein belongs to the long (3 C-C) scorpion toxin superfamily. Post-translationally, only three disulfide bridges can be formed, because only seven cysteines are present. In terms of tissue distribution, expressed by the venom gland.

It localises to the secreted. In terms of biological role, binds voltage-independently at site-3 of sodium channels (Nav) and inhibits the inactivation of the activated channels, thereby blocking neuronal transmission. The protein is Toxin Boma6e of Buthus occitanus mardochei (Moroccan scorpion).